Consider the following 312-residue polypeptide: Tyrosine recombinase XerC (312 aa).

Residues 1–103 (MISAFYAFLD…AIKSFSQYCI (103 aa)) form the Core-binding (CB) domain. The Tyr recombinase domain maps to 124-306 (ELPSPITYEQ…SMKLKKQTHE (183 aa)). Catalysis depends on residues Arg164, Lys188, His258, Arg261, and His284. Tyr293 (O-(3'-phospho-DNA)-tyrosine intermediate) is an active-site residue.

It belongs to the 'phage' integrase family. XerC subfamily. In terms of assembly, forms a cyclic heterotetrameric complex composed of two molecules of XerC and two molecules of XerD.

It is found in the cytoplasm. Site-specific tyrosine recombinase, which acts by catalyzing the cutting and rejoining of the recombining DNA molecules. The XerC-XerD complex is essential to convert dimers of the bacterial chromosome into monomers to permit their segregation at cell division. It also contributes to the segregational stability of plasmids. The polypeptide is Tyrosine recombinase XerC (Chlamydia caviae (strain ATCC VR-813 / DSM 19441 / 03DC25 / GPIC) (Chlamydophila caviae)).